We begin with the raw amino-acid sequence, 94 residues long: UPF0381 protein YfcZ (94 aa).

This sequence belongs to the UPF0381 family.

The sequence is that of UPF0381 protein YfcZ (yfcZ) from Escherichia coli O6:H1 (strain CFT073 / ATCC 700928 / UPEC).